A 128-amino-acid chain; its full sequence is Ribosome-binding factor A (128 aa).

It belongs to the RbfA family. Monomer. Binds 30S ribosomal subunits, but not 50S ribosomal subunits or 70S ribosomes.

The protein resides in the cytoplasm. Its function is as follows. One of several proteins that assist in the late maturation steps of the functional core of the 30S ribosomal subunit. Associates with free 30S ribosomal subunits (but not with 30S subunits that are part of 70S ribosomes or polysomes). Required for efficient processing of 16S rRNA. May interact with the 5'-terminal helix region of 16S rRNA. This chain is Ribosome-binding factor A, found in Haemophilus influenzae (strain 86-028NP).